A 239-amino-acid polypeptide reads, in one-letter code: Uridylate kinase (239 aa).

Lys12–Gly15 contributes to the ATP binding site. Positions Gly20–Gly25 are involved in allosteric activation by GTP. Gly54 is a binding site for UMP. ATP contacts are provided by Gly55 and Arg59. UMP-binding positions include Asp74 and Thr135–Thr142. ATP contacts are provided by Thr162, Tyr168, and Asp171.

It belongs to the UMP kinase family. As to quaternary structure, homohexamer.

The protein localises to the cytoplasm. It catalyses the reaction UMP + ATP = UDP + ADP. It participates in pyrimidine metabolism; CTP biosynthesis via de novo pathway; UDP from UMP (UMPK route): step 1/1. Allosterically activated by GTP. Inhibited by UTP. Catalyzes the reversible phosphorylation of UMP to UDP. This is Uridylate kinase from Methylococcus capsulatus (strain ATCC 33009 / NCIMB 11132 / Bath).